Consider the following 425-residue polypeptide: MAGAEGAAGRQSELEPVVSLVDVLEEDEELENEACAVLGGSDSEKCSYSQGSVKRQALYACSTCTPEGEEPAGICLACSYECHGSHKLFELYTKRNFRCDCGNSKFKNLECKLLPDKAKVNSGNKYNDNFFGLYCICKRPYPDPEDEIPDEMIQCVVCEDWFHGRHLGAIPPESGDFQEMVCQACMKRCSFLWAYAAQLAVTKISTEDDGLVRNIDGIGDQEVIKPENGEHQDSTLKEDVPEQGKDDVREVKVEQNSEPCAGSSSESDLQTVFKNESLNAESKSGCKLQELKAKQLIKKDTATYWPLNWRSKLCTCQDCMKMYGDLDVLFLTDEYDTVLAYENKGKIAQATDRSDPLMDTLSSMNRVQQVELICEYNDLKTELKDYLKRFADEGTVVKREDIQQFFEEFQSKKRRRVDGMQYYCS.

Residues 44 to 116 form a UBR-type zinc finger; the sequence is EKCSYSQGSV…KNLECKLLPD (73 aa). Residues 132–188 form a PHD-type; atypical zinc finger; that stretch reads GLYCICKRPYPDPEDEIPDEMIQCVVCEDWFHGRHLGAIPPESGDFQEMVCQACMKR. Residues Lys225 and Lys252 each participate in a glycyl lysine isopeptide (Lys-Gly) (interchain with G-Cter in SUMO2) cross-link. The tract at residues 225–246 is disordered; it reads KPENGEHQDSTLKEDVPEQGKD. Ser264 bears the Phosphoserine mark. Lys274 is covalently cross-linked (Glycyl lysine isopeptide (Lys-Gly) (interchain with G-Cter in SUMO2)). Ser354 is modified (phosphoserine). A Glycyl lysine isopeptide (Lys-Gly) (interchain with G-Cter in SUMO2) cross-link involves residue Lys398.

Expressed in sperm (at protein level).

It catalyses the reaction S-ubiquitinyl-[E2 ubiquitin-conjugating enzyme]-L-cysteine + [acceptor protein]-L-lysine = [E2 ubiquitin-conjugating enzyme]-L-cysteine + N(6)-ubiquitinyl-[acceptor protein]-L-lysine.. It participates in protein modification; protein ubiquitination. In terms of biological role, E3 ubiquitin-protein ligase which is a component of the N-end rule pathway. Recognizes and binds to proteins bearing specific N-terminal residues that are destabilizing according to the N-end rule, leading to their ubiquitination and subsequent degradation. The polypeptide is Putative E3 ubiquitin-protein ligase UBR7 (UBR7) (Homo sapiens (Human)).